A 70-amino-acid polypeptide reads, in one-letter code: Mu-conotoxin PnIVB (70 aa).

The N-terminal stretch at 1-20 is a signal peptide; sequence MMSKLGVLLIICLLLCPLTA. Positions 21–51 are excised as a propeptide; the sequence is VPQDGDQPADQPAERMQDDISSEHHPFFDPV.

Contains 3 disulfide bonds. They are not added, since framework IV presents two different connectivities (I-V, II-III, IV-VI and I-III, II-V, IV-VI). In terms of tissue distribution, expressed by the venom duct.

The protein localises to the secreted. Mu-conotoxins block voltage-gated sodium channels (Nav). Blocks reversibly sodium channels in molluskan neurons, but has no effect on sodium currents in bovine chromaffin cells or in rat brain synaptosomes. Induces paralysis in bivalve mollusks (Mytilus). No effect are observed on fish (Gambusia) and fly larvae (Sarcophaga). Is approximately 6 times more potent than PnIVA in blockade of the sodium current in Lymnaea neurons. The sequence is that of Mu-conotoxin PnIVB from Conus pennaceus (Feathered cone).